The chain runs to 359 residues: Biotin synthase (359 aa).

Positions 47–276 (HHGRRVRIHV…EADLRMAGGR (230 aa)) constitute a Radical SAM core domain. Positions 65, 69, and 72 each coordinate [4Fe-4S] cluster. 4 residues coordinate [2Fe-2S] cluster: cysteine 109, cysteine 141, cysteine 201, and arginine 271. The tract at residues 320 to 359 (EPVIVEDGPERQTPATADDTPSGDPEAADRRRQPSAGPAG) is disordered.

It belongs to the radical SAM superfamily. Biotin synthase family. As to quaternary structure, homodimer. It depends on [4Fe-4S] cluster as a cofactor. [2Fe-2S] cluster is required as a cofactor.

The enzyme catalyses (4R,5S)-dethiobiotin + (sulfur carrier)-SH + 2 reduced [2Fe-2S]-[ferredoxin] + 2 S-adenosyl-L-methionine = (sulfur carrier)-H + biotin + 2 5'-deoxyadenosine + 2 L-methionine + 2 oxidized [2Fe-2S]-[ferredoxin]. It participates in cofactor biosynthesis; biotin biosynthesis; biotin from 7,8-diaminononanoate: step 2/2. Its function is as follows. Catalyzes the conversion of dethiobiotin (DTB) to biotin by the insertion of a sulfur atom into dethiobiotin via a radical-based mechanism. The polypeptide is Biotin synthase (Salinibacter ruber (strain DSM 13855 / M31)).